A 990-amino-acid chain; its full sequence is Bacteriophage adsorption protein A (990 aa).

Positions 1-27 (MKENNLNRVIGWSGLLLTSLLSTSALA) are cleaved as a signal peptide. 3 TPR repeats span residues 81–114 (IPLT…HPGD), 612–645 (ANAY…EPNN), and 646–679 (SNTQ…LPDD).

As to quaternary structure, (Microbial infection) Interacts with N4 phage non-contractile sheath protein; this interaction is essential for viral adsorption to the host.

The protein localises to the cell outer membrane. Its function is as follows. (Microbial infection) Allows N4 phage attachment by binding to the viral non-contractile sheath protein. The chain is Bacteriophage adsorption protein A (nfrA) from Escherichia coli (strain K12).